The chain runs to 416 residues: 4-hydroxy-3-methylbut-2-en-1-yl diphosphate synthase (flavodoxin) (416 aa).

[4Fe-4S] cluster is bound by residues cysteine 304, cysteine 307, cysteine 350, and glutamate 357.

The protein belongs to the IspG family. [4Fe-4S] cluster serves as cofactor.

It carries out the reaction (2E)-4-hydroxy-3-methylbut-2-enyl diphosphate + oxidized [flavodoxin] + H2O + 2 H(+) = 2-C-methyl-D-erythritol 2,4-cyclic diphosphate + reduced [flavodoxin]. It functions in the pathway isoprenoid biosynthesis; isopentenyl diphosphate biosynthesis via DXP pathway; isopentenyl diphosphate from 1-deoxy-D-xylulose 5-phosphate: step 5/6. Functionally, converts 2C-methyl-D-erythritol 2,4-cyclodiphosphate (ME-2,4cPP) into 1-hydroxy-2-methyl-2-(E)-butenyl 4-diphosphate. This Agrobacterium fabrum (strain C58 / ATCC 33970) (Agrobacterium tumefaciens (strain C58)) protein is 4-hydroxy-3-methylbut-2-en-1-yl diphosphate synthase (flavodoxin).